The chain runs to 79 residues: Small ribosomal subunit protein bS18 (79 aa).

The protein belongs to the bacterial ribosomal protein bS18 family. As to quaternary structure, part of the 30S ribosomal subunit. Forms a tight heterodimer with protein bS6.

Binds as a heterodimer with protein bS6 to the central domain of the 16S rRNA, where it helps stabilize the platform of the 30S subunit. In Afipia carboxidovorans (strain ATCC 49405 / DSM 1227 / KCTC 32145 / OM5) (Oligotropha carboxidovorans), this protein is Small ribosomal subunit protein bS18.